A 109-amino-acid chain; its full sequence is UPF0060 membrane protein RC1_3291 (109 aa).

Transmembrane regions (helical) follow at residues 4 to 24 (IATYLLAAVAEIGGCFAFWAW), 31 to 51 (PLWLIPGMASLALFAWALTRI), 59 to 79 (AYAAYGGIYILTSLVWMWLVE), and 88 to 108 (TLGTVLCVSGALVIIFGPRGG).

The protein belongs to the UPF0060 family.

It localises to the cell inner membrane. This is UPF0060 membrane protein RC1_3291 from Rhodospirillum centenum (strain ATCC 51521 / SW).